Here is a 317-residue protein sequence, read N- to C-terminus: Tumor-associated calcium signal transducer 2 (317 aa).

The first 24 residues, 1–24, serve as a signal peptide directing secretion; sequence MARGLDLAPLLLLLLAMATRFCTA. At 25-270 the chain is on the extracellular side; that stretch reads QSNCTCPTNK…QFSMKRLTAG (246 aa). N-linked (GlcNAc...) asparagine glycosylation is present at Asn-27. A Thyroglobulin type-1 domain is found at 64 to 139; the sequence is TSKCLLLKAR…TDKGDQSLRC (76 aa). Cystine bridges form between Cys-67–Cys-102, Cys-113–Cys-119, and Cys-121–Cys-139. An N-linked (GlcNAc...) asparagine glycan is attached at Asn-114. N-linked (GlcNAc...) asparagine glycans are attached at residues Asn-162 and Asn-202. Residues 271-291 traverse the membrane as a helical segment; it reads VIAVIAVVSVAVVAGVVVLVV. Residues 292–317 are Cytoplasmic-facing; it reads TKRRKSGKYKKVELKELGEMRSEPSL.

The protein belongs to the EPCAM family. In terms of tissue distribution, expressed in kidney, lung, ovary and testis. High levels of expression in immortalized keratinocytes.

It localises to the membrane. Its function is as follows. May function as a growth factor receptor. In Mus musculus (Mouse), this protein is Tumor-associated calcium signal transducer 2 (Tacstd2).